The chain runs to 125 residues: Small ribosomal subunit protein uS12 (125 aa).

The interval 9–28 is disordered; it reads RSERSKLKKKTKSPALKQCP. D89 bears the 3-methylthioaspartic acid mark. The segment at 104–125 is disordered; the sequence is AQGVKDRKQGRSKYGTKRPKKA. Residues 113–125 are compositionally biased toward basic residues; the sequence is GRSKYGTKRPKKA.

It belongs to the universal ribosomal protein uS12 family. In terms of assembly, part of the 30S ribosomal subunit. Contacts proteins S8 and S17. May interact with IF1 in the 30S initiation complex.

In terms of biological role, with S4 and S5 plays an important role in translational accuracy. Its function is as follows. Interacts with and stabilizes bases of the 16S rRNA that are involved in tRNA selection in the A site and with the mRNA backbone. Located at the interface of the 30S and 50S subunits, it traverses the body of the 30S subunit contacting proteins on the other side and probably holding the rRNA structure together. The combined cluster of proteins S8, S12 and S17 appears to hold together the shoulder and platform of the 30S subunit. The polypeptide is Small ribosomal subunit protein uS12 (Rippkaea orientalis (strain PCC 8801 / RF-1) (Cyanothece sp. (strain PCC 8801))).